Here is a 293-residue protein sequence, read N- to C-terminus: Oxidoreductase R2 (293 aa).

It belongs to the asaB hydroxylase/desaturase family.

It participates in secondary metabolite biosynthesis. In terms of biological role, oxidoreductase; part of the gene cluster that mediates the biosynthesis of squalestatin S1 (SQS1, also known as zaragozic acid A), a heavily oxidized fungal polyketide that offers potent cholesterol lowering activity by targeting squalene synthase (SS). SQS1 is composed of a 2,8-dioxobicyclic[3.2.1]octane-3,4,5-tricarboxyclic acid core that is connected to two lipophilic polyketide arms. These initial steps feature the priming of an unusual benzoic acid starter unit onto the highly reducing polyketide synthase pks2, followed by oxaloacetate extension and product release to generate a tricarboxylic acid containing product. The phenylalanine ammonia lyase (PAL) M7 and the acyl-CoA ligase M9 are involved in transforming phenylalanine into benzoyl-CoA. The citrate synthase-like protein R3 is involved in connecting the C-alpha-carbons of the hexaketide chain and oxaloacetate to afford the tricarboxylic acid unit. The potential hydrolytic enzymes, M8 and M10, are in close proximity to pks2 and may participate in product release. On the other side, the tetraketide arm is synthesized by a the squalestatin tetraketide synthase pks1 and enzymatically esterified to the core in the last biosynthetic step, by the acetyltransferase M4. The biosynthesis of the tetraketide must involve 3 rounds of chain extension. After the first and second rounds methyl-transfer occurs, and in all rounds of extension the ketoreductase and dehydratase are active. The enoyl reductase and C-MeT of pks1 are not active in the final round of extension. The acetyltransferase M4 appears to have a broad substrate selectivity for its acyl CoA substrate, allowing the in vitro synthesis of novel squalestatins. The biosynthesis of SQS1 requires several oxidative steps likely performed by oxidoreductases M1, R1 and R2. Finally, in support of the identification of the cluster as being responsible for SQS1 production, the cluster contains a gene encoding a putative squalene synthase (SS) R6, suggesting a likely mechanism for self-resistance. In Phoma sp. (strain ATCC 20986 / MF5453), this protein is Oxidoreductase R2.